A 146-amino-acid chain; its full sequence is Hemoglobin subunit beta (146 aa).

Valine 1 is modified (N-acetylvaline). One can recognise a Globin domain in the interval 2-146 (HLSADEKNAL…VANALAHKYH (145 aa)). At serine 44 the chain carries Phosphoserine. Lysine 59 carries the post-translational modification N6-acetyllysine. Histidine 63 is a heme b binding site. Lysine 82 is modified (N6-acetyllysine). Heme b is bound at residue histidine 92. Cysteine 93 bears the S-nitrosocysteine mark. Lysine 144 is modified (N6-acetyllysine).

It belongs to the globin family. As to quaternary structure, heterotetramer of two alpha chains and two beta chains. Red blood cells.

Functionally, involved in oxygen transport from the lung to the various peripheral tissues. The chain is Hemoglobin subunit beta from Sciurus carolinensis (Eastern gray squirrel).